The sequence spans 78 residues: MFTMKKSLLLLFFLGTISLSLCEEERGADEEEGDGEKLMKRGLFSILKGVGKIAIKGLGKNLGKMGLDLVSCKISKEC.

A signal peptide spans 1 to 22; it reads MFTMKKSLLLLFFLGTISLSLC. The propeptide occupies 23–39; the sequence is EEERGADEEEGDGEKLM. A disulfide bridge links Cys-72 with Cys-78.

In terms of tissue distribution, expressed by the skin glands.

Its subcellular location is the secreted. Functionally, antimicrobial peptide. The polypeptide is Esculentin-2Vb (Odorrana versabilis (Chinese bamboo leaf odorous frog)).